Consider the following 230-residue polypeptide: ATP phosphoribosyltransferase (230 aa).

Belongs to the ATP phosphoribosyltransferase family. Short subfamily. Heteromultimer composed of HisG and HisZ subunits.

The protein resides in the cytoplasm. The enzyme catalyses 1-(5-phospho-beta-D-ribosyl)-ATP + diphosphate = 5-phospho-alpha-D-ribose 1-diphosphate + ATP. It participates in amino-acid biosynthesis; L-histidine biosynthesis; L-histidine from 5-phospho-alpha-D-ribose 1-diphosphate: step 1/9. In terms of biological role, catalyzes the condensation of ATP and 5-phosphoribose 1-diphosphate to form N'-(5'-phosphoribosyl)-ATP (PR-ATP). Has a crucial role in the pathway because the rate of histidine biosynthesis seems to be controlled primarily by regulation of HisG enzymatic activity. This chain is ATP phosphoribosyltransferase, found in Agrobacterium fabrum (strain C58 / ATCC 33970) (Agrobacterium tumefaciens (strain C58)).